We begin with the raw amino-acid sequence, 859 residues long: Cation/H(+) antiporter 24 (859 aa).

The next 12 helical transmembrane spans lie at 64–84 (AFSTFLIEAIIIIFFIKVVSI), 92–112 (PRIVSEIIGGMMIGPSMFGGI), 122–142 (PIANYICANIGLMGFFYFLFL), 161–181 (YIAAIGVIVPIICVGSVGMAM), 194–214 (SIGGVVFALSFTSFPVIYTVL), 227–247 (FAMSVALLGDMAGVYVIVIFE), 258–278 (YSVFWFLVSVVIFAAFMLLVV), 291–311 (EGTLVNQNYIVMILMGVLASC), 312–332 (FLTDMFGLSIAVGPIWLGLLV), 348–368 (TFIYEFLMPFTYALVGQGTNI), 384–404 (FYMTVVGFITKFLSTAFAALF), and 438–458 (IVGFPGYTVMVLHTVVVTAVT). The segment at 538-566 (IDHEQRKEEEEEEYEEEEEEPERKQSGRI) is disordered. Residues 546–557 (EEEEEYEEEEEE) are compositionally biased toward acidic residues. Phosphoserine is present on S857.

Belongs to the monovalent cation:proton antiporter 2 (CPA2) transporter (TC 2.A.37) family. CHX (TC 2.A.37.4) subfamily. As to expression, specifically expressed in pollen.

Its subcellular location is the membrane. May operate as a cation/H(+) antiporter. The sequence is that of Cation/H(+) antiporter 24 (CHX24) from Arabidopsis thaliana (Mouse-ear cress).